Here is a 268-residue protein sequence, read N- to C-terminus: Phosphatidylglycerol--prolipoprotein diacylglyceryl transferase (268 aa).

Transmembrane regions (helical) follow at residues 10–30 (VALA…LIGI), 56–76 (LVFW…VLFY), 92–112 (WKGG…ALWF), 120–140 (FFEL…AGRI), 174–194 (PSQL…LWLF), 202–222 (MAVS…VEFV), and 236–256 (WLTM…GLIW). A 1,2-diacyl-sn-glycero-3-phospho-(1'-sn-glycerol) is bound at residue Arg139.

This sequence belongs to the Lgt family.

It localises to the cell inner membrane. The enzyme catalyses L-cysteinyl-[prolipoprotein] + a 1,2-diacyl-sn-glycero-3-phospho-(1'-sn-glycerol) = an S-1,2-diacyl-sn-glyceryl-L-cysteinyl-[prolipoprotein] + sn-glycerol 1-phosphate + H(+). It participates in protein modification; lipoprotein biosynthesis (diacylglyceryl transfer). Catalyzes the transfer of the diacylglyceryl group from phosphatidylglycerol to the sulfhydryl group of the N-terminal cysteine of a prolipoprotein, the first step in the formation of mature lipoproteins. The sequence is that of Phosphatidylglycerol--prolipoprotein diacylglyceryl transferase from Pseudomonas putida (strain ATCC 700007 / DSM 6899 / JCM 31910 / BCRC 17059 / LMG 24140 / F1).